Reading from the N-terminus, the 533-residue chain is Fimbrial subunit type 1 (533 aa).

A signal peptide spans 1 to 30 (MHSLNTRRGLGLAAAMTLAAGALVAPTGAA). Residues 496–500 (LPLTG) carry the LPXTG sorting signal motif. T499 is subject to Pentaglycyl murein peptidoglycan amidated threonine. A propeptide spans 500–533 (GANGVIFLTIAGALLVAGGAVVAYANKRRHVAKH) (removed by sortase).

Its subcellular location is the secreted. The protein resides in the cell wall. It localises to the fimbrium. Major fimbrial subunit of A.viscosus. This chain is Fimbrial subunit type 1, found in Actinomyces viscosus.